Reading from the N-terminus, the 153-residue chain is Mitotic-spindle organizing protein 2 (153 aa).

The tract at residues 80–153 is disordered; that stretch reads KVSETSTGDA…SSSSSQLTSN (74 aa). Polar residues-rich tracts occupy residues 81–99 and 107–133; these read VSETSTGDASSTSHTTAVP and KMSSGQGEKSARESSSQRVPRQVSATR. The span at 134–153 shows a compositional bias: low complexity; it reads GQKSTKSSGSSSSSSQLTSN.

The protein belongs to the MOZART2 family. As to quaternary structure, part of the gamma-tubulin complex. Interacts with TUBG1.

The protein resides in the cytoplasm. The protein localises to the cytoskeleton. It is found in the microtubule organizing center. It localises to the centrosome. Its subcellular location is the spindle. This chain is Mitotic-spindle organizing protein 2 (mzt2), found in Danio rerio (Zebrafish).